We begin with the raw amino-acid sequence, 368 residues long: Dihydroorotate dehydrogenase (quinone) (368 aa).

FMN contacts are provided by residues 67–71 and threonine 91; that span reads AGFDK. Substrate is bound at residue lysine 71. Substrate is bound at residue 116-120; it reads NRMGF. 2 residues coordinate FMN: asparagine 146 and asparagine 179. Residue asparagine 179 participates in substrate binding. Serine 182 (nucleophile) is an active-site residue. Residue asparagine 184 participates in substrate binding. Residues lysine 222 and threonine 250 each coordinate FMN. 251–252 is a binding site for substrate; sequence NT. FMN is bound by residues glycine 276, glycine 305, and 326–327; that span reads YS.

Belongs to the dihydroorotate dehydrogenase family. Type 2 subfamily. Monomer. Requires FMN as cofactor.

It localises to the cell membrane. The catalysed reaction is (S)-dihydroorotate + a quinone = orotate + a quinol. The protein operates within pyrimidine metabolism; UMP biosynthesis via de novo pathway; orotate from (S)-dihydroorotate (quinone route): step 1/1. In terms of biological role, catalyzes the conversion of dihydroorotate to orotate with quinone as electron acceptor. In Streptomyces coelicolor (strain ATCC BAA-471 / A3(2) / M145), this protein is Dihydroorotate dehydrogenase (quinone).